The chain runs to 235 residues: Proteasome subunit beta type-1 (235 aa).

The propeptide occupies 1–20 (MSRLGFEQFPDYQVPGMKHP).

It belongs to the peptidase T1B family. In terms of assembly, the 26S proteasome consists of a 20S proteasome core and two 19S regulatory subunits. The 20S proteasome core is composed of 28 subunits that are arranged in four stacked rings, resulting in a barrel-shaped structure. The two end rings are each formed by seven alpha subunits, and the two central rings are each formed by seven beta subunits. The catalytic chamber with the active sites is on the inside of the barrel.

It is found in the cytoplasm. The protein localises to the nucleus. Functionally, non-catalytic component of the proteasome, a multicatalytic proteinase complex which is characterized by its ability to cleave peptides with Arg, Phe, Tyr, Leu, and Glu adjacent to the leaving group at neutral or slightly basic pH. The proteasome has an ATP-dependent proteolytic activity. In Drosophila melanogaster (Fruit fly), this protein is Proteasome subunit beta type-1 (Prosbeta6).